We begin with the raw amino-acid sequence, 279 residues long: Estrogen receptor beta (279 aa).

The region spanning 27–261 is the NR LBD domain; it reads SPEQLVLTLL…DLLLEMLNAH (235 aa).

This sequence belongs to the nuclear hormone receptor family. NR3 subfamily. As to quaternary structure, binds DNA as a homodimer. Can form a heterodimer with ESR1. Interacts with NCOA1, NCOA3, NCOA5 and NCOA6 coactivators, leading to a strong increase of transcription of target genes. Interacts with UBE1C and AKAP13. Interacts with DNTTIP2. Interacts with CCDC62 in the presence of estradiol/E2; this interaction seems to enhance the transcription of target genes. Interacts with DNAAF4. Interacts with PRMT2. Interacts with CCAR2 (via N-terminus) in a ligand-independent manner. Interacts with RBM39, in the presence of estradiol (E2). Interacts with STUB1/CHIP.

Its subcellular location is the nucleus. Its function is as follows. Nuclear hormone receptor. Binds estrogens with an affinity similar to that of ESR1/ER-alpha, and activates expression of reporter genes containing estrogen response elements (ERE) in an estrogen-dependent manner. The chain is Estrogen receptor beta (ESR2) from Macaca mulatta (Rhesus macaque).